A 331-amino-acid polypeptide reads, in one-letter code: C4-dicarboxylate-binding periplasmic protein DctP (331 aa).

The N-terminal stretch at 1–23 is a signal peptide; that stretch reads MLKHTAKALVCALSLTVAGIVQA.

Belongs to the bacterial solute-binding protein 7 family. The complex comprises the extracytoplasmic solute receptor protein DctP, and the two transmembrane proteins DctQ and DctM.

It is found in the periplasm. Functionally, part of the tripartite ATP-independent periplasmic (TRAP) transport system DctPQM involved in C4-dicarboxylates uptake. The polypeptide is C4-dicarboxylate-binding periplasmic protein DctP (Pseudomonas aeruginosa (strain ATCC 15692 / DSM 22644 / CIP 104116 / JCM 14847 / LMG 12228 / 1C / PRS 101 / PAO1)).